The primary structure comprises 243 residues: MPCNRSRPSLYSLSYIKRGKTRNYLYPFWSPFAYYLYCYKYRITLREKMLPCCYKSITYKEQEDLTLRPHCCLPCSCLPCSCLQCSESLGGLQVGRSTAQEKDHSQLKELYSAGNLTVLSTDPLLHQDPVQLDFHFRLTPHSSAHWHGLLCDHRLFLDIPYQALDQGNRESLTATLEYVEEKTNVDSVFVNFQIDRKDRGALLRAFSYMGFEVVRPDHPALPPWDNVIFMVYPLERDLGHPGQ.

Residues Ser6, Ser9, and Ser12 each carry the phosphoserine modification.

This sequence belongs to the ODC antizyme family. In terms of assembly, interacts with ODC1 and thereby sterically blocks ODC homodimerization. Interacts with AZIN2; this interaction disrupts the interaction between the antizyme and ODC1. Interacts with GGN. In terms of tissue distribution, testis specific. Expressed throughout the differentiation process from spermatids to spermatozoa in the inner part of the seminiferous tubules.

Its subcellular location is the nucleus. It localises to the cytoplasm. Functionally, ornithine decarboxylase (ODC) antizyme protein that negatively regulates ODC activity and intracellular polyamine biosynthesis and uptake in response to increased intracellular polyamine levels. Binds to ODC monomers, inhibiting the assembly of the functional ODC homodimers. Does not target the ODC monomers for degradation, which allows a protein synthesis-independent restoration of ODC activity. Stabilizes AZIN2 by interfering with its ubiquitination. Involved in the translocation of AZNI2 from ER-Golgi intermediate compartment (ERGIC) to the cytosol. Probably plays a key role in spermatogenesis by regulating the intracellular concentration of polyamines in haploid germ cells. In Mus musculus (Mouse), this protein is Ornithine decarboxylase antizyme 3 (Oaz3).